The sequence spans 252 residues: T-box transcription factor mls-1 (252 aa).

Positions L40–E210 form a DNA-binding region, T-box.

In terms of assembly, may interact with unc-37.

It localises to the nucleus. Its function is as follows. Probable transcription factor required for the cell fate specification of non-striated uterine muscle precursor cells. Furthermore, may function with the transcriptional corepressor unc-37. The polypeptide is T-box transcription factor mls-1 (Caenorhabditis elegans).